Here is a 271-residue protein sequence, read N- to C-terminus: N-acetylaspartate synthetase (271 aa).

The tract at residues Met-1–Ala-38 is disordered. The segment covering Cys-12–Ser-24 has biased composition (pro residues). Residues Gly-25–Gly-37 show a composition bias toward low complexity. A helical membrane pass occupies residues Val-89–Cys-109. The N-acetyltransferase domain occupies Leu-115–Gln-258.

Belongs to the NAT8 family.

It is found in the cytoplasm. It localises to the microsome membrane. The protein localises to the mitochondrion membrane. Its subcellular location is the endoplasmic reticulum membrane. The catalysed reaction is L-aspartate + acetyl-CoA = N-acetyl-L-aspartate + CoA + H(+). Functionally, catalyzes the synthesis of N-acetylaspartate acid (NAA) from L-aspartate and acetyl-CoA. The protein is N-acetylaspartate synthetase (nat8l) of Xenopus tropicalis (Western clawed frog).